The chain runs to 1215 residues: Homeodomain-interacting protein kinase 3 (1215 aa).

Lysine 27 is covalently cross-linked (Glycyl lysine isopeptide (Lys-Gly) (interchain with G-Cter in SUMO2)). The 329-residue stretch at 197-525 folds into the Protein kinase domain; it reads YEVLDFLGRG…PAETLNHPFV (329 aa). ATP is bound by residues 203–211 and lysine 226; that span reads LGRGTFGQV. Aspartate 322 functions as the Proton acceptor in the catalytic mechanism. Residue tyrosine 359 is modified to Phosphotyrosine. The segment at 767–944 is interaction with AR; sequence QNRGILVKLM…NSMSDEEQES (178 aa). An interaction with FAS region spans residues 796 to 891; sequence NTNIPHSAFI…SQRHSLRECK (96 aa). The tract at residues 855–1011 is required for localization to nuclear speckles; the sequence is QTIIIADSPS…ENGLNADEHM (157 aa). Residues 866-918 are SUMO interaction motifs (SIM); required for nuclear localization and kinase activity; the sequence is AVSVITISSDTDEEETSQRHSLRECKGSLDCEACQSTLNIDRMCSLSSPDSTL. Positions 870 to 880 are interaction with UBL1; the sequence is ITISSDTDEEE. The segment covering 912–929 has biased composition (low complexity); sequence SSPDSTLSTSSSGQSSPS. The disordered stretch occupies residues 912-987; the sequence is SSPDSTLSTS…ELVSSADTET (76 aa). Residues 945 to 957 are compositionally biased toward polar residues; that stretch reads SCDTVDGSPTSDS. Residue lysine 1208 forms a Glycyl lysine isopeptide (Lys-Gly) (interchain with G-Cter in SUMO) linkage.

Belongs to the protein kinase superfamily. CMGC Ser/Thr protein kinase family. HIPK subfamily. As to quaternary structure, interacts with Nkx1-2. Interacts with FAS and DAXX. Probably part of a complex consisting of HIPK3, FAS and FADD. Interacts with and stabilizes ligand-bound androgen receptor (AR). Interacts with UBL1/SUMO-1. Binds to NR5A1/SF1, SPEN/MINT and RUNX2. In terms of processing, autophosphorylated, but autophosphorylation is not required for catalytic activity. Post-translationally, may be sumoylated. Overexpressed in multidrug resistant cells. Highly expressed in heart and skeletal muscle, and at lower levels in placenta, pancreas, brain, spleen, prostate, thymus, testis, small intestine, colon and leukocytes. Not found in liver and lung.

It is found in the cytoplasm. It localises to the nucleus. The catalysed reaction is L-seryl-[protein] + ATP = O-phospho-L-seryl-[protein] + ADP + H(+). The enzyme catalyses L-threonyl-[protein] + ATP = O-phospho-L-threonyl-[protein] + ADP + H(+). Functionally, serine/threonine-protein kinase involved in transcription regulation, apoptosis and steroidogenic gene expression. Phosphorylates JUN and RUNX2. Seems to negatively regulate apoptosis by promoting FADD phosphorylation. Enhances androgen receptor-mediated transcription. May act as a transcriptional corepressor for NK homeodomain transcription factors. The phosphorylation of NR5A1 activates SF1 leading to increased steroidogenic gene expression upon cAMP signaling pathway stimulation. In osteoblasts, supports transcription activation: phosphorylates RUNX2 that synergizes with SPEN/MINT to enhance FGFR2-mediated activation of the osteocalcin FGF-responsive element (OCFRE). In Homo sapiens (Human), this protein is Homeodomain-interacting protein kinase 3 (HIPK3).